A 605-amino-acid chain; its full sequence is Ras guanine nucleotide exchange factor A (605 aa).

The LisH domain occupies D67–T99. An N-terminal Ras-GEF domain is found at D198 to S320. The Ras-GEF domain occupies D353 to K597.

In terms of assembly, component of the Sca1 complex composed of at least gefA, gefH, scaA, phr, and the protein phosphatase 2A subunits pppA and pho2B. Interacts directly with gefH.

It is found in the cell membrane. Functionally, ras-bound GDP/GTP exchange factor required for normal activation of adenylyl cyclase. Component of the Sca1 complex, a regulator of cell motility, chemotaxis and signal relay. The Sca1 complex is recruited to the plasma membrane in a chemoattractant- and F-actin-dependent manner and is enriched at the leading edge of chemotaxing cells where it regulates F-actin dynamics and signal relay by controlling the activation of rasC and the downstream target of rapamycin complex 2 (TORC2)-Akt/protein kinase B (PKB) pathway. This chain is Ras guanine nucleotide exchange factor A (gefA), found in Dictyostelium discoideum (Social amoeba).